The primary structure comprises 191 residues: Large ribosomal subunit protein bL9 (191 aa).

This sequence belongs to the bacterial ribosomal protein bL9 family.

Binds to the 23S rRNA. The protein is Large ribosomal subunit protein bL9 of Granulibacter bethesdensis (strain ATCC BAA-1260 / CGDNIH1).